A 554-amino-acid polypeptide reads, in one-letter code: Kinesin-like protein 3 (554 aa).

The Kinesin motor domain maps to 3 to 325 (SIKVVCRIRP…LRFGHRAKSI (323 aa)). ATP-binding positions include 84–91 (GQTGSGKT) and 233–240 (GSESVGKS). Positions 446-473 (LSSTKQQLSDLMTALGDAQERYVELVKN) form a coiled coil.

It belongs to the TRAFAC class myosin-kinesin ATPase superfamily. Kinesin family.

The protein localises to the cytoplasm. It is found in the cytoskeleton. Functionally, cytoplasmic motor that could play a role in Golgi membrane recycling. The chain is Kinesin-like protein 3 (klp3) from Schizosaccharomyces pombe (strain 972 / ATCC 24843) (Fission yeast).